The primary structure comprises 153 residues: MSNQLNTMDIKEILKFLPHRYPFLLIDRVLDFTPGETLHAIKNVTINEPFFQGHFPVQPVMPGVLILEAMAQATGLLAFKTMSEEPSNDALYYFAGIDKARFKRVVEPGDQLHFEVQMIKERRGIGVFTGVAKVDGEVVCSAEIMCARREISK.

Residue His-54 is part of the active site.

Belongs to the thioester dehydratase family. FabZ subfamily.

The protein resides in the cytoplasm. The catalysed reaction is a (3R)-hydroxyacyl-[ACP] = a (2E)-enoyl-[ACP] + H2O. In terms of biological role, involved in unsaturated fatty acids biosynthesis. Catalyzes the dehydration of short chain beta-hydroxyacyl-ACPs and long chain saturated and unsaturated beta-hydroxyacyl-ACPs. The protein is 3-hydroxyacyl-[acyl-carrier-protein] dehydratase FabZ of Shewanella pealeana (strain ATCC 700345 / ANG-SQ1).